The following is a 304-amino-acid chain: MGNHAGKRELNAEKASTNSETNRGESEKKRNLGELSRTTSEDNEVFGEADANQNNGTSSQDTAVTDSKRTADPKNAWQDAHPADPGSRPHLIRLFSRDAPGREDNTFKDRPSESDELQTIQEDSAATSESLDVMASQKRPSQRHGSKYLATASTMDHARHGFLPRHRDTGILDSIGRFFGGDRGAPKRGSGKDSHHPARTAHYGSLPQKSHGRTQDENPVVHFFKNIVTPRTPPPSQGKGRGLSLSRFSWGAEGQRPGFGYGGRASDYKSAHKGFKGVDAQGTLSKIFKLGGRDSRSGSPMARR.

Basic and acidic residues-rich tracts occupy residues 1 to 12 and 22 to 32; these read MGNHAGKRELNA and NRGESEKKRNL. A disordered region spans residues 1-146; that stretch reads MGNHAGKREL…QKRPSQRHGS (146 aa). The residue at position 2 (Gly-2) is an N-acetylalanine. Positions 51 to 65 are enriched in polar residues; the sequence is ANQNNGTSSQDTAVT. Basic and acidic residues predominate over residues 95–113; the sequence is FSRDAPGREDNTFKDRPSE. At Ser-96 the chain carries Phosphoserine. Polar residues predominate over residues 117-130; the sequence is LQTIQEDSAATSES. Residues Ser-141 and Ser-146 each carry the phosphoserine modification. The residue at position 148 (Tyr-148) is a Phosphotyrosine. Thr-151 is modified (phosphothreonine). Ser-153 carries the phosphoserine modification. Position 154 is a phosphothreonine (Thr-154). Arg-159 and Arg-165 each carry citrulline; in form C8. Position 167 is a citrulline (Arg-167). Thr-169 bears the Phosphothreonine mark. At Ser-174 the chain carries Phosphoserine. Arg-177 and Arg-183 each carry omega-N-methylarginine. The interval 179 to 222 is induces experimental autoimmune encephalomyelitis (EAE) 1; the sequence is FGGDRGAPKRGSGKDSHHPARTAHYGSLPQKSHGRTQDENPVVH. Positions 180–249 are disordered; it reads GGDRGAPKRG…GRGLSLSRFS (70 aa). Residue Ser-190 is modified to Phosphoserine. Arg-199 bears the Citrulline mark. The residue at position 203 (Tyr-203) is a Phosphotyrosine. Phosphoserine is present on Ser-210. A phosphothreonine mark is found at Thr-214 and Thr-229. A Citrulline modification is found at Arg-231. Thr-232 carries the post-translational modification Phosphothreonine. Position 237 is a deamidated glutamine (Gln-237). Omega-N-methylarginine; alternate is present on Arg-241. Arg-241 carries the post-translational modification Symmetric dimethylarginine; alternate. The interval 246–256 is induces experimental autoimmune encephalomyelitis (EAE) 2; sequence SRFSWGAEGQR. Ser-249 is modified (phosphoserine). 2 positions are modified to citrulline; in form C8: Arg-256 and Arg-264. Deamidated glutamine is present on Gln-281. Arg-293 bears the Citrulline; in form C8 mark. Ser-295 is modified (phosphoserine). Position 296 is a citrulline (Arg-296). Position 299 is a phosphoserine; by UHMK1 (Ser-299). Position 303 is a citrulline (Arg-303). Citrulline; in form C8 is present on Arg-304.

Belongs to the myelin basic protein family. As to quaternary structure, homodimer. Isoform 3 exists as a homodimer. In terms of processing, several charge isomers of MBP; C1 (the most cationic, least modified, and most abundant form), C2, C3, C4, C5, C6, C7, C8-A and C8-B (the least cationic form); are produced as a result of optional PTM, such as phosphorylation, deamidation of glutamine or asparagine, arginine citrullination and methylation. C8-A and C8-B contain each two mass isoforms termed C8-A(H), C8-A(L), C8-B(H) and C8-B(L), (H) standing for higher and (L) for lower molecular weight. C3, C4 and C5 are phosphorylated. The ratio of methylated arginine residues decreases during aging, making the protein more cationic. The N-terminal alanine is acetylated (isoform 3, isoform 4, isoform 5 and isoform 6). Post-translationally, arg-241 was found to be 6% monomethylated and 60% symmetrically dimethylated. In terms of processing, proteolytically cleaved in B cell lysosomes by cathepsin CTSG which degrades the major immunogenic MBP epitope and prevents the activation of MBP-specific autoreactive T cells. Phosphorylated by TAOK2, VRK2, MAPK11, MAPK12, MAPK14 and MINK1. In terms of tissue distribution, MBP isoforms are found in both the central and the peripheral nervous system, whereas Golli-MBP isoforms are expressed in fetal thymus, spleen and spinal cord, as well as in cell lines derived from the immune system.

It localises to the myelin membrane. It is found in the nucleus. The classic group of MBP isoforms (isoform 4-isoform 14) are with PLP the most abundant protein components of the myelin membrane in the CNS. They have a role in both its formation and stabilization. The smaller isoforms might have an important role in remyelination of denuded axons in multiple sclerosis. The non-classic group of MBP isoforms (isoform 1-isoform 3/Golli-MBPs) may preferentially have a role in the early developing brain long before myelination, maybe as components of transcriptional complexes, and may also be involved in signaling pathways in T-cells and neural cells. Differential splicing events combined with optional post-translational modifications give a wide spectrum of isomers, with each of them potentially having a specialized function. Induces T-cell proliferation. In Homo sapiens (Human), this protein is Myelin basic protein (MBP).